The sequence spans 382 residues: Lipid-A-disaccharide synthase (382 aa).

The protein belongs to the LpxB family.

The catalysed reaction is 2-N,3-O-bis[(3R)-3-hydroxytetradecanoyl]-alpha-D-glucosaminyl 1-phosphate + UDP-2-N,3-O-bis[(3R)-3-hydroxytetradecanoyl]-alpha-D-glucosamine = lipid A disaccharide (E. coli) + UDP + H(+). The enzyme catalyses a lipid X + a UDP-2-N,3-O-bis[(3R)-3-hydroxyacyl]-alpha-D-glucosamine = a lipid A disaccharide + UDP + H(+). It functions in the pathway glycolipid biosynthesis; lipid IV(A) biosynthesis; lipid IV(A) from (3R)-3-hydroxytetradecanoyl-[acyl-carrier-protein] and UDP-N-acetyl-alpha-D-glucosamine: step 5/6. Functionally, condensation of UDP-2,3-diacylglucosamine and 2,3-diacylglucosamine-1-phosphate to form lipid A disaccharide, a precursor of lipid A, a phosphorylated glycolipid that anchors the lipopolysaccharide to the outer membrane of the cell. The polypeptide is Lipid-A-disaccharide synthase (Shigella dysenteriae serotype 1 (strain Sd197)).